We begin with the raw amino-acid sequence, 130 residues long: Small ribosomal subunit protein uS8 (130 aa).

This sequence belongs to the universal ribosomal protein uS8 family. Part of the 30S ribosomal subunit. Contacts proteins S5 and S12.

One of the primary rRNA binding proteins, it binds directly to 16S rRNA central domain where it helps coordinate assembly of the platform of the 30S subunit. This Haemophilus influenzae (strain 86-028NP) protein is Small ribosomal subunit protein uS8.